Consider the following 274-residue polypeptide: Mitochondrial outer membrane protein porin 4 (274 aa).

The residue at position 2 (G2) is an N-acetylglycine. S76 is modified (phosphoserine).

Belongs to the eukaryotic mitochondrial porin (TC 1.B.8.1) family. In terms of tissue distribution, widely expressed.

The protein resides in the cell membrane. Its subcellular location is the mitochondrion outer membrane. Functionally, forms a channel through the mitochondrial outer membrane that allows diffusion of small hydrophilic molecules. The channel adopts an open conformation at low or zero membrane potential and a closed conformation at potentials above 30-40 mV. The open state has a weak anion selectivity whereas the closed state is cation-selective. Involved in plant growth and development at the vegetative and reproductive stages. Is important for leaf and pollen development and mitochondrial membrane potential steady state. May be involved in disease resistance. The polypeptide is Mitochondrial outer membrane protein porin 4 (VDAC4) (Arabidopsis thaliana (Mouse-ear cress)).